The primary structure comprises 312 residues: Tetraspanin-17 (312 aa).

Helical transmembrane passes span 17-37, 64-84, 89-109, and 274-294; these read IFSI…LWML, VSLV…CGAV, FLLL…VAMG, and IWIF…GICL.

The protein belongs to the tetraspanin (TM4SF) family. Expressed in dopaminergic neurons, head muscles, vulva and spermatheca.

The protein resides in the cell membrane. Its subcellular location is the cell projection. It localises to the dendrite. The protein localises to the axon. Protects dopaminergic neurons against oxidative stress-induced neurodegeneration. May act partly via dopamine receptor dop-2 to negatively regulate dopamine reuptake transporter dat-1 activity. Also plays a role in modulating behaviors linked to dopamine signaling. Confers protection against oxidative stress in the whole body. This chain is Tetraspanin-17, found in Caenorhabditis elegans.